The chain runs to 594 residues: Amino-acid permease 1 (594 aa).

12 consecutive transmembrane segments (helical) span residues 75 to 95 (QMIA…GKSL), 101 to 121 (GSLM…ILSL), 146 to 166 (IGFA…PSEI), 181 to 201 (LNPA…NAFG), 210 to 230 (FVSS…AIII), 297 to 317 (VFYR…LVVP), 323 to 343 (LGNV…VLPH), 344 to 364 (ITNA…VFAA), 390 to 410 (PVIS…NAAP), 416 to 436 (FDWL…LSFI), 468 to 488 (YGVL…IFPV), and 498 to 518 (FFVS…SPIF). A disordered region spans residues 550–587 (TSELSEKDLTKPNLQSNDNKNSEDLESNTPPQKKSALQ).

Belongs to the amino acid-polyamine-organocation (APC) superfamily.

It localises to the membrane. The chain is Amino-acid permease 1 (aap1) from Schizosaccharomyces pombe (strain 972 / ATCC 24843) (Fission yeast).